We begin with the raw amino-acid sequence, 984 residues long: Shutoff protein (984 aa).

The tract at residues 131–231 is disordered; sequence GVAAESDPSD…DLERDALVAP (101 aa). Acidic residues predominate over residues 137 to 147; the sequence is DPSDDEPDPEP. Residues 148-159 are compositionally biased toward basic and acidic residues; sequence EYDHREADHDSD. The segment covering 176-186 has biased composition (acidic residues); sequence VDEEPQDDSPS. A compositionally biased stretch (polar residues) spans 190 to 202; it reads TASTVIEEAQTSA. The segment covering 205 to 216 has biased composition (basic and acidic residues); sequence DSHDDDTHRDDG. The binding to host EIF4G stretch occupies residues 411 to 476; the sequence is LMETLLQPFA…AVRYTATLEL (66 aa). One can recognise an RRM domain in the interval 479–597; it reads RVFREPSMVK…RLYSLPNPTA (119 aa). 2 disordered regions span residues 810–853 and 876–984; these read GVYK…GNRA and KVGP…RQEE. At Tyr-812 the chain carries Phosphotyrosine; by host. Positions 913–923 are enriched in basic residues; the sequence is AGGRRFGRRNT. Residues 945–958 are compositionally biased toward low complexity; it reads RGQQGEHPTTSPSA.

The protein belongs to the adenoviridae shutoff protein family. In terms of assembly, monomer. Interacts with hexon protein; this interaction allows chaperoning and trimerization of hexon proteins. Interacts (via N-terminus) with host initiation factor EIF4G (via C-terminus). Interacts (via RRM domain) with viral mRNAs that contain the tripartite leader; this interaction allows ribosome shunting and expression of viral late mRNAs. Might be cleaved by the viral protease. Post-translationally, phosphorylated. Tyrosine phosphorylation enhances preferential binding to tripartite leader mRNAs and allows ribosome shunting. In terms of processing, methylated. Asymmetric dimethylation by host PRMT1 of the Arg/Gly-rich region may regulate shutoff protein binding to hexon and promote the capsid assembly in the nucleus.

Its subcellular location is the host cytoplasm. Its function is as follows. Protein that inhibits host translation while promoting late viral translation by ribosome shunting. Blocks host cap-dependent translation by binding to eIF4G, displacing MKNK1 from cap initiation complexes and preventing EIF4E phosphorylation. Binds to the tripartite leader sequence of viral late mRNAs and recruits host eIF4G, PABPC1/poly-A binding protein and 40S ribosomes subunits on viral mRNAs, allowing ribosome shunting and efficient translation of late viral mRNAs even though conventional translation via ribosome scanning from the cap has been shut off in the host cell. During assembly, acts as a chaperone protein that helps hexon proteins assembly into trimers. The sequence is that of Shutoff protein from Galliformes (FAdV-1).